A 537-amino-acid polypeptide reads, in one-letter code: Tyrosine-protein kinase Fyn (537 aa).

A lipid anchor (N-myristoyl glycine) is attached at glycine 2. Residues cysteine 3 and cysteine 6 are each lipidated (S-palmitoyl cysteine). Threonine 12 carries the phosphothreonine; by PKC modification. The 62-residue stretch at 82 to 143 (TGVTLFVALY…PSNYVAPVDS (62 aa)) folds into the SH3 domain. Positions 149–246 (WYFGKLGRKD…GLCCRLVVPC (98 aa)) constitute an SH2 domain. One can recognise a Protein kinase domain in the interval 271 to 524 (LQLIKRLGNG…YLQGFLEDYF (254 aa)). Residues 277–285 (LGNGQFGEV) and lysine 299 contribute to the ATP site. Aspartate 390 (proton acceptor) is an active-site residue. Tyrosine 420 carries the phosphotyrosine; by autocatalysis modification. Position 531 is a phosphotyrosine (tyrosine 531).

The protein belongs to the protein kinase superfamily. Tyr protein kinase family. SRC subfamily. In terms of assembly, associates through its SH3 domain, to the p85 subunit of phosphatidylinositol 3-kinase. The cofactor is Mn(2+).

The enzyme catalyses L-tyrosyl-[protein] + ATP = O-phospho-L-tyrosyl-[protein] + ADP + H(+). Inhibited by phosphorylation of Tyr-531 by leukocyte common antigen and activated by dephosphorylation of this site. Functionally, tyrosine-protein kinase implicated in the control of cell growth. Plays a role in the regulation of intracellular calcium levels. Required in brain development and mature brain function with important roles in the regulation of axon growth, axon guidance, and neurite extension. Blocks axon outgrowth and attraction induced by ntn1 by phosphorylating its receptor ddc. The chain is Tyrosine-protein kinase Fyn (fyn) from Xenopus laevis (African clawed frog).